The chain runs to 166 residues: 3-dehydroquinate dehydratase (166 aa).

Catalysis depends on Tyr22, which acts as the Proton acceptor. Residues Asn73, His79, and Asp86 each contribute to the substrate site. His99 acts as the Proton donor in catalysis. Residues 100-101 and Arg110 each bind substrate; that span reads IT.

The protein belongs to the type-II 3-dehydroquinase family. As to quaternary structure, homododecamer.

The enzyme catalyses 3-dehydroquinate = 3-dehydroshikimate + H2O. It participates in metabolic intermediate biosynthesis; chorismate biosynthesis; chorismate from D-erythrose 4-phosphate and phosphoenolpyruvate: step 3/7. Functionally, catalyzes a trans-dehydration via an enolate intermediate. The protein is 3-dehydroquinate dehydratase of Wolinella succinogenes (strain ATCC 29543 / DSM 1740 / CCUG 13145 / JCM 31913 / LMG 7466 / NCTC 11488 / FDC 602W) (Vibrio succinogenes).